The primary structure comprises 683 residues: DNA ligase (683 aa).

NAD(+) contacts are provided by residues 36-40 (DAVYD), 85-86 (SL), and Glu121. Residue Lys123 is the N6-AMP-lysine intermediate of the active site. Residues Arg144, Glu180, Lys296, and Lys320 each coordinate NAD(+). Zn(2+)-binding residues include Cys413, Cys416, Cys431, and Cys437. Residues 605–683 (PSEGHLSGKV…ESGWRVLAGL (79 aa)) form the BRCT domain.

The protein belongs to the NAD-dependent DNA ligase family. LigA subfamily. Mg(2+) is required as a cofactor. Requires Mn(2+) as cofactor.

It catalyses the reaction NAD(+) + (deoxyribonucleotide)n-3'-hydroxyl + 5'-phospho-(deoxyribonucleotide)m = (deoxyribonucleotide)n+m + AMP + beta-nicotinamide D-nucleotide.. DNA ligase that catalyzes the formation of phosphodiester linkages between 5'-phosphoryl and 3'-hydroxyl groups in double-stranded DNA using NAD as a coenzyme and as the energy source for the reaction. It is essential for DNA replication and repair of damaged DNA. The protein is DNA ligase of Gluconobacter oxydans (strain 621H) (Gluconobacter suboxydans).